The primary structure comprises 186 residues: Homeobox expressed in ES cells 1 (186 aa).

Positions 109 to 168 form a DNA-binding region, homeobox; sequence GRRPRTAFTRSQIEILENVFRVNSYPGIDIREELAGKLALDEDRIQIWFQNRRAKLKRSH.

Belongs to the ANF homeobox family. In terms of assembly, interacts (via N-terminus) with zyx.

The protein resides in the nucleus. Its function is as follows. Regulates the earliest stages of development of the anterior neural plate. Plays a role in forebrain development by inhibiting the expression of otx2 and pax6 in the rostral region of the anterior neural plate. Necessary for both neural differentiation and neural patterning. Controls Spemann organizer development. May act as a transcriptional repressor. This chain is Homeobox expressed in ES cells 1, found in Xenopus tropicalis (Western clawed frog).